A 311-amino-acid chain; its full sequence is Reaction center protein L chain (311 aa).

A run of 3 helical transmembrane segments spans residues 68 to 90 (FWGFVSVIGIIFGSYFYINETIL), 123 to 151 (GFAWQMTVLFATIAFFGWMMRQVDISMKL), and 156 to 178 (HVPIAFGVAFSAWLVLQVIRPIA). 2 residues coordinate (7R,8Z)-bacteriochlorophyll b: His-183 and His-213. The chain crosses the membrane as a helical span at residues 211-238 (PFHAIGITGLFASTWLLACHGSLILSAA). His-230 contributes to the Fe cation binding site. Phe-253 provides a ligand contact to a ubiquinone. The chain crosses the membrane as a helical span at residues 262–287 (GESGVHRLGYIFAIGGILSADLCILL). Residue His-267 coordinates Fe cation.

It belongs to the reaction center PufL/M/PsbA/D family. As to quaternary structure, reaction center is composed of four bacteriochlorophylls, two bacteriopheophytins, two ubiquinones, one iron, and two highly hydrophobic polypeptide chains (designated L and M).

It localises to the cell membrane. Functionally, the reaction center is a membrane-bound complex that mediates the initial photochemical event in the electron transfer process of photosynthesis. This is Reaction center protein L chain (pufL) from Chloroflexus aurantiacus (strain ATCC 29366 / DSM 635 / J-10-fl).